The following is a 557-amino-acid chain: Eudesmanediol synthase (557 aa).

Aspartate 310 and aspartate 314 together coordinate Mg(2+). Residues aspartate 310, aspartate 314, and arginine 450 each coordinate substrate. The short motif at aspartate 310–aspartate 314 is the DDXXD motif element. Residues asparagine 453 and serine 457 each contribute to the Mg(2+) site.

Belongs to the terpene synthase family. In terms of assembly, monomer. It depends on Mg(2+) as a cofactor. Mn(2+) is required as a cofactor.

The protein resides in the cytoplasm. The enzyme catalyses (2E,6E)-farnesyl diphosphate + 2 H2O = 7-epi-ent-eudesmane-5,11-diol + diphosphate. Its pathway is secondary metabolite biosynthesis; terpenoid biosynthesis. Component of the volatile terpenes biosynthesis pathways. Dihydroxylated sesquiterpenoid synthase that generates dually hydroxylated products directly from (E,E)-farnesyl diphosphate, primarily eudesmane-2,11-diol, along with two closely related structural isomers. This chain is Eudesmanediol synthase, found in Zea mays (Maize).